The sequence spans 122 residues: Large ribosomal subunit protein uL18 (122 aa).

This sequence belongs to the universal ribosomal protein uL18 family. Part of the 50S ribosomal subunit; part of the 5S rRNA/L5/L18/L25 subcomplex. Contacts the 5S and 23S rRNAs.

Its function is as follows. This is one of the proteins that bind and probably mediate the attachment of the 5S RNA into the large ribosomal subunit, where it forms part of the central protuberance. The polypeptide is Large ribosomal subunit protein uL18 (Agathobacter rectalis (strain ATCC 33656 / DSM 3377 / JCM 17463 / KCTC 5835 / VPI 0990) (Eubacterium rectale)).